The chain runs to 419 residues: L-rhamnose isomerase (419 aa).

Residues histidine 262, aspartate 294, and aspartate 296 each coordinate Mn(2+).

The protein belongs to the rhamnose isomerase family. As to quaternary structure, homotetramer. Mn(2+) serves as cofactor.

The protein localises to the cytoplasm. The catalysed reaction is L-rhamnopyranose = L-rhamnulose. It participates in carbohydrate degradation; L-rhamnose degradation; glycerone phosphate from L-rhamnose: step 1/3. Its function is as follows. Catalyzes the interconversion of L-rhamnose and L-rhamnulose. The chain is L-rhamnose isomerase from Salmonella typhimurium (strain LT2 / SGSC1412 / ATCC 700720).